The following is a 173-amino-acid chain: Flagellar assembly factor FliW (173 aa).

The segment at 152–173 is disordered; sequence STTVRRKASPPAAGEDKGDVQE.

It belongs to the FliW family. As to quaternary structure, interacts with translational regulator CsrA and flagellin(s).

It is found in the cytoplasm. Its function is as follows. Acts as an anti-CsrA protein, binds CsrA and prevents it from repressing translation of its target genes, one of which is flagellin. Binds to flagellin and participates in the assembly of the flagellum. This chain is Flagellar assembly factor FliW, found in Nitratidesulfovibrio vulgaris (strain ATCC 29579 / DSM 644 / CCUG 34227 / NCIMB 8303 / VKM B-1760 / Hildenborough) (Desulfovibrio vulgaris).